Consider the following 476-residue polypeptide: Probable cytosolic Fe-S cluster assembly factor GF22738 (476 aa).

Cysteine 23, cysteine 68, cysteine 71, cysteine 74, cysteine 187, cysteine 243, cysteine 395, and cysteine 399 together coordinate [4Fe-4S] cluster.

Belongs to the NARF family.

Component of the cytosolic iron-sulfur (Fe/S) protein assembly machinery. Required for maturation of extramitochondrial Fe/S proteins. The polypeptide is Probable cytosolic Fe-S cluster assembly factor GF22738 (Drosophila ananassae (Fruit fly)).